A 404-amino-acid polypeptide reads, in one-letter code: Protein ARK2N (404 aa).

Composition is skewed to basic and acidic residues over residues 1–12 and 23–32; these read MKMEEAVGKVEE and SEQETAKEED. 2 disordered regions span residues 1-50 and 63-255; these read MKME…ADST and RRDS…TNSD. S66 is subject to Phosphoserine. S67 is modified (phosphoserine; by AMPK). The segment covering 87 to 121 has biased composition (polar residues); that stretch reads SDSSNHCMLSPSSSGHLADSDTLSSAEENEPSQAE. Phosphoserine occurs at positions 143, 145, and 147. Residues 169-187 are compositionally biased toward basic residues; sequence AKVKGHRSQKHKERIRLLR. Positions 175–200 form a coiled coil; sequence RSQKHKERIRLLRQKREAAARKKYNL. The tract at residues 202–226 is required for interaction with CSNK2B; sequence QDSSTSDSDLTCDSSTSSSDDDEEV. Over residues 203-219 the composition is skewed to low complexity; sequence DSSTSDSDLTCDSSTSS. Phosphoserine is present on residues S327, S328, and S330. R347 carries the omega-N-methylarginine modification. K358 is covalently cross-linked (Glycyl lysine isopeptide (Lys-Gly) (interchain with G-Cter in SUMO2)).

In terms of assembly, interacts with CSNK2B (via KSSR). Interacts with JUN; the interaction is mediated by CSNK2B. Post-translationally, phosphorylated at Ser-67 by AMPK. In skeletal muscle, phosphorylation is induced by exercise and seems to increase muscle contractile function. Expressed in skeletal muscle.

The protein resides in the nucleus. AMPK substrate important for exercise capacity and skeletal muscle function. Required for normal contraction-induced signaling. In terms of biological role, (Microbial infection) Upon Epstein-Barr virus (EBV) infection, suppresses viral BZLF1 expression and subsequent EBV reactivation by interacting with JUN and inhibiting its transcriptional activator activity on BZLF1 Z promoter. The protein is Protein ARK2N of Homo sapiens (Human).